A 293-amino-acid chain; its full sequence is MPWIQLKLNTTGNQAESLGDVLVESGAVSVTFQDTHDNPVFEPLPGETRLWGDTDVIGLYDAETDMADVVAMLECHPQIGKGFIHKIEQLEDKDWEREWMDNFHPMRFGERLWICPSWRDVPDPTAVNVMLDPGLAFGTGTHPTTALCLQWLDSLDLNGKTLIDFGCGSGILAIAALKLGAARAIGIDIDPQAIQASRDNAQRNGVSERLELYLAKDQPAELSADVVVANILAGPLRELAPLISVLPTTGGHLGLSGVLATQAAGVAQAYEDKFILDPVAEKEEWCRITGIKK.

The S-adenosyl-L-methionine site is built by Thr145, Gly166, Asp188, and Asn230.

This sequence belongs to the methyltransferase superfamily. PrmA family.

The protein localises to the cytoplasm. It catalyses the reaction L-lysyl-[protein] + 3 S-adenosyl-L-methionine = N(6),N(6),N(6)-trimethyl-L-lysyl-[protein] + 3 S-adenosyl-L-homocysteine + 3 H(+). Methylates ribosomal protein L11. The chain is Ribosomal protein L11 methyltransferase from Yersinia pseudotuberculosis serotype O:3 (strain YPIII).